Reading from the N-terminus, the 279-residue chain is 3-methyl-2-oxobutanoate hydroxymethyltransferase (279 aa).

Mg(2+) is bound by residues Asp43 and Asp82. 3-methyl-2-oxobutanoate contacts are provided by residues Asp43 to Ser44, Asp82, and Lys112. Glu114 provides a ligand contact to Mg(2+). Residue Glu181 is the Proton acceptor of the active site.

Belongs to the PanB family. In terms of assembly, homodecamer; pentamer of dimers. Requires Mg(2+) as cofactor.

Its subcellular location is the cytoplasm. It catalyses the reaction 3-methyl-2-oxobutanoate + (6R)-5,10-methylene-5,6,7,8-tetrahydrofolate + H2O = 2-dehydropantoate + (6S)-5,6,7,8-tetrahydrofolate. Its pathway is cofactor biosynthesis; (R)-pantothenate biosynthesis; (R)-pantoate from 3-methyl-2-oxobutanoate: step 1/2. Its function is as follows. Catalyzes the reversible reaction in which hydroxymethyl group from 5,10-methylenetetrahydrofolate is transferred onto alpha-ketoisovalerate to form ketopantoate. This Lysinibacillus sphaericus (strain C3-41) protein is 3-methyl-2-oxobutanoate hydroxymethyltransferase.